Consider the following 401-residue polypeptide: Elongation factor Tu (401 aa).

In terms of domain architecture, tr-type G spans 10-209 (KPHINVGTIG…AVDEYIPTPQ (200 aa)). A G1 region spans residues 19–26 (GHVDHGKT). 19 to 26 (GHVDHGKT) serves as a coordination point for GTP. Threonine 26 provides a ligand contact to Mg(2+). The interval 60–64 (GITIA) is G2. The segment at 81 to 84 (DCPG) is G3. GTP-binding positions include 81–85 (DCPGH) and 136–139 (NKVD). A G4 region spans residues 136-139 (NKVD). The G5 stretch occupies residues 174-176 (SAR).

The protein belongs to the TRAFAC class translation factor GTPase superfamily. Classic translation factor GTPase family. EF-Tu/EF-1A subfamily. In terms of assembly, monomer.

The protein localises to the cytoplasm. It carries out the reaction GTP + H2O = GDP + phosphate + H(+). Functionally, GTP hydrolase that promotes the GTP-dependent binding of aminoacyl-tRNA to the A-site of ribosomes during protein biosynthesis. The sequence is that of Elongation factor Tu from Chloroflexus aurantiacus (strain ATCC 29366 / DSM 635 / J-10-fl).